Reading from the N-terminus, the 631-residue chain is Arginine--tRNA ligase (631 aa).

The 'HIGH' region motif lies at 132 to 142 (PNIAKPLHVGH).

This sequence belongs to the class-I aminoacyl-tRNA synthetase family.

The protein resides in the cytoplasm. It carries out the reaction tRNA(Arg) + L-arginine + ATP = L-arginyl-tRNA(Arg) + AMP + diphosphate. In Halobacterium salinarum (strain ATCC 700922 / JCM 11081 / NRC-1) (Halobacterium halobium), this protein is Arginine--tRNA ligase.